The chain runs to 89 residues: UPF0250 protein Bphyt_0500 (89 aa).

The protein belongs to the UPF0250 family.

This is UPF0250 protein Bphyt_0500 from Paraburkholderia phytofirmans (strain DSM 17436 / LMG 22146 / PsJN) (Burkholderia phytofirmans).